The primary structure comprises 344 residues: Holliday junction branch migration complex subunit RuvB (344 aa).

The large ATPase domain (RuvB-L) stretch occupies residues 1–181 (MERIVTPAEM…FGVLCAMEYY (181 aa)). ATP-binding positions include Leu-20, Arg-21, Gly-62, Lys-65, Thr-66, Thr-67, 128–130 (EDY), Arg-171, Tyr-181, and Arg-218. Thr-66 contributes to the Mg(2+) binding site. The segment at 182–252 (DENQLKEIVI…EAREALELLE (71 aa)) is small ATPAse domain (RuvB-S). Residues 255–344 (NQGFDKVDNK…SNKGQTSFFK (90 aa)) are head domain (RuvB-H). DNA contacts are provided by Arg-310 and Arg-315.

It belongs to the RuvB family. As to quaternary structure, homohexamer. Forms an RuvA(8)-RuvB(12)-Holliday junction (HJ) complex. HJ DNA is sandwiched between 2 RuvA tetramers; dsDNA enters through RuvA and exits via RuvB. An RuvB hexamer assembles on each DNA strand where it exits the tetramer. Each RuvB hexamer is contacted by two RuvA subunits (via domain III) on 2 adjacent RuvB subunits; this complex drives branch migration. In the full resolvosome a probable DNA-RuvA(4)-RuvB(12)-RuvC(2) complex forms which resolves the HJ.

The protein resides in the cytoplasm. The catalysed reaction is ATP + H2O = ADP + phosphate + H(+). In terms of biological role, the RuvA-RuvB-RuvC complex processes Holliday junction (HJ) DNA during genetic recombination and DNA repair, while the RuvA-RuvB complex plays an important role in the rescue of blocked DNA replication forks via replication fork reversal (RFR). RuvA specifically binds to HJ cruciform DNA, conferring on it an open structure. The RuvB hexamer acts as an ATP-dependent pump, pulling dsDNA into and through the RuvAB complex. RuvB forms 2 homohexamers on either side of HJ DNA bound by 1 or 2 RuvA tetramers; 4 subunits per hexamer contact DNA at a time. Coordinated motions by a converter formed by DNA-disengaged RuvB subunits stimulates ATP hydrolysis and nucleotide exchange. Immobilization of the converter enables RuvB to convert the ATP-contained energy into a lever motion, pulling 2 nucleotides of DNA out of the RuvA tetramer per ATP hydrolyzed, thus driving DNA branch migration. The RuvB motors rotate together with the DNA substrate, which together with the progressing nucleotide cycle form the mechanistic basis for DNA recombination by continuous HJ branch migration. Branch migration allows RuvC to scan DNA until it finds its consensus sequence, where it cleaves and resolves cruciform DNA. The sequence is that of Holliday junction branch migration complex subunit RuvB from Clostridium botulinum (strain Alaska E43 / Type E3).